Reading from the N-terminus, the 110-residue chain is Putative zinc finger protein ORF110 (110 aa).

The segment at 3–26 (YVCTACKLKFHTFEEFKIHVHLFH) adopts a C2H2-type zinc-finger fold.

This is Putative zinc finger protein ORF110 from Acidianus filamentous virus 1 (isolate United States/Yellowstone) (AFV-1).